We begin with the raw amino-acid sequence, 107 residues long: HTH-type transcriptional regulator Rv2034 (107 aa).

One can recognise an HTH arsR-type domain in the interval 1 to 93 (MSTYRSPDRA…DLDRFWTRAL (93 aa)). Residues 33 to 56 (VGELARDLPVSRPAVSQHLKVLKT) constitute a DNA-binding region (H-T-H motif).

As to quaternary structure, homodimer.

DNA-binding ability is not susceptible to zinc, nickel, cobalt, cadmium, lead, copper and manganese ions. Functionally, involved in the regulation of lipid metabolism and hypoxic response. Positively regulates transcription of various genes, such as phoP, groEL2 and dosR. Negatively regulates its own transcription. Acts by binding to a specific palindromic sequence motif in promoter regions. This Mycobacterium tuberculosis (strain ATCC 25618 / H37Rv) protein is HTH-type transcriptional regulator Rv2034.